The chain runs to 719 residues: Calpain-12 (719 aa).

The Calpain catalytic domain occupies 45–341 (LFRDPYFPAG…FDTVQICSLS (297 aa)). Residues cysteine 105, histidine 259, and asparagine 283 contribute to the active site. Residues 342–540 (PEVLGPSPEG…DDVISADLQS (199 aa)) are domain III. Residues 393–402 (DEEDDEDEEG) are compositionally biased toward acidic residues. The tract at residues 393–418 (DEEDDEDEEGPWGGWGAAGARGPARG) is disordered. The domain IV stretch occupies residues 541–719 (LQGPYLPLEL…RQWMEVATFS (179 aa)). In terms of domain architecture, EF-hand spans 620-655 (GYLLEWQAIFNKFDEDTSGTMNSYELRLALNAAGFH). Ca(2+)-binding residues include aspartate 633, aspartate 635, serine 637, threonine 639, and glutamate 644.

The protein belongs to the peptidase C2 family.

In terms of biological role, calcium-regulated non-lysosomal thiol-protease. The protein is Calpain-12 (CAPN12) of Homo sapiens (Human).